The primary structure comprises 317 residues: Apolipoprotein E (317 aa).

The first 18 residues, 1 to 18, serve as a signal peptide directing secretion; sequence MKVLWVALVITLLAGCQA. Repeat copies occupy residues 80-101, 102-123, 124-145, 146-167, 168-189, 190-211, 212-233, and 234-255. Residues 80–255 are 8 X 22 AA approximate tandem repeats; it reads VLMDETMKEV…HLEEMREQLD (176 aa). Position 143 is a methionine sulfoxide (Met143). The tract at residues 158–168 is LDL and other lipoprotein receptors binding; sequence HLRKLRKRLLR. Residue 162-165 coordinates heparin; the sequence is LRKR. Residues 210–290 form a lipid-binding and lipoprotein association region; sequence AATVGTLASQ…SWFEPLVEDM (81 aa). Position 229–236 (229–236) interacts with heparin; the sequence is HQKLRGRV. The interval 266–317 is homooligomerization; sequence TQMRLQAEAFQARLKSWFEPLVEDMQRQWAGLVEKVQLAMATSSTSAPSENH. The specificity for association with VLDL stretch occupies residues 278 to 290; the sequence is RLKSWFEPLVEDM.

This sequence belongs to the apolipoprotein A1/A4/E family. Homotetramer. May interact with ABCA1; functionally associated with ABCA1 in the biogenesis of HDLs. May interact with APP/A4 amyloid-beta peptide; the interaction is extremely stable in vitro but its physiological significance is unclear. May interact with MAPT. May interact with MAP2. In the cerebrospinal fluid, interacts with secreted SORL1. Interacts with PMEL; this allows the loading of PMEL luminal fragment on ILVs to induce fibril nucleation. Post-translationally, APOE exists as multiple glycosylated and sialylated glycoforms within cells and in plasma. The extent of glycosylation and sialylation are tissue and context specific. In terms of processing, glycated in plasma VLDL. Phosphorylated by FAM20C in the extracellular medium.

The protein localises to the secreted. It is found in the extracellular space. The protein resides in the extracellular matrix. Its subcellular location is the extracellular vesicle. It localises to the endosome. The protein localises to the multivesicular body. Its function is as follows. APOE is an apolipoprotein, a protein associating with lipid particles, that mainly functions in lipoprotein-mediated lipid transport between organs via the plasma and interstitial fluids. APOE is a core component of plasma lipoproteins and is involved in their production, conversion and clearance. Apolipoproteins are amphipathic molecules that interact both with lipids of the lipoprotein particle core and the aqueous environment of the plasma. As such, APOE associates with chylomicrons, chylomicron remnants, very low density lipoproteins (VLDL) and intermediate density lipoproteins (IDL) but shows a preferential binding to high-density lipoproteins (HDL). It also binds a wide range of cellular receptors including the LDL receptor/LDLR and the very low-density lipoprotein receptor/VLDLR that mediate the cellular uptake of the APOE-containing lipoprotein particles. Finally, APOE also has a heparin-binding activity and binds heparan-sulfate proteoglycans on the surface of cells, a property that supports the capture and the receptor-mediated uptake of APOE-containing lipoproteins by cells. The chain is Apolipoprotein E (APOE) from Physeter macrocephalus (Sperm whale).